The primary structure comprises 387 residues: WD repeat-containing protein 89 (387 aa).

WD repeat units follow at residues 21–65 (KEPT…VLRE), 68–107 (GYPG…EKPV), 112–156 (GYPS…QNLS), 168–208 (THSD…EEDA), 214–254 (NSIS…TDEP), and 319–358 (GHAA…KTFT).

This chain is WD repeat-containing protein 89 (WDR89), found in Homo sapiens (Human).